Reading from the N-terminus, the 156-residue chain is 6,7-dimethyl-8-ribityllumazine synthase (156 aa).

5-amino-6-(D-ribitylamino)uracil contacts are provided by residues Phe25, 59–61 (AFE), and 83–85 (AVI). (2S)-2-hydroxy-3-oxobutyl phosphate is bound at residue 88-89 (GT). The Proton donor role is filled by His91. A 5-amino-6-(D-ribitylamino)uracil-binding site is contributed by Phe116. Arg130 lines the (2S)-2-hydroxy-3-oxobutyl phosphate pocket.

This sequence belongs to the DMRL synthase family.

The enzyme catalyses (2S)-2-hydroxy-3-oxobutyl phosphate + 5-amino-6-(D-ribitylamino)uracil = 6,7-dimethyl-8-(1-D-ribityl)lumazine + phosphate + 2 H2O + H(+). Its pathway is cofactor biosynthesis; riboflavin biosynthesis; riboflavin from 2-hydroxy-3-oxobutyl phosphate and 5-amino-6-(D-ribitylamino)uracil: step 1/2. Functionally, catalyzes the formation of 6,7-dimethyl-8-ribityllumazine by condensation of 5-amino-6-(D-ribitylamino)uracil with 3,4-dihydroxy-2-butanone 4-phosphate. This is the penultimate step in the biosynthesis of riboflavin. This is 6,7-dimethyl-8-ribityllumazine synthase from Desulfovibrio desulfuricans (strain ATCC 27774 / DSM 6949 / MB).